Reading from the N-terminus, the 252-residue chain is Type IV pilus assembly protein PilF (252 aa).

An N-terminal signal peptide occupies residues 1 to 17; it reads MTVRAALVFLLAVGLTG. A lipid anchor (N-palmitoyl cysteine) is attached at cysteine 18. Cysteine 18 is lipidated: S-diacylglycerol cysteine. 6 TPR repeats span residues 32–67, 84–101, 104–133, 139–171, 174–203, and 208–235; these read GRDE…LEID, EMEP…LASD, NARV…EASQ, ERSR…LRLN, QPSV…LFAQ, and NARS…GLQL.

As to quaternary structure, interacts with PilQ; this interaction is essential for assemby of PilQ into secretins.

It localises to the cell outer membrane. Functionally, essential component of the type IV pilus (T4P) that plays a role in surface and host cell adhesion, colonization, biofilm maturation, virulence, and twitching, a form of surface-associated motility facilitated by cycles of extension, adhesion, and retraction of T4P fibers. Plays an essential role in the outer membrane localization and assembly of PilQ into secretins which are dodecamers of PilQ. This chain is Type IV pilus assembly protein PilF (pilF), found in Pseudomonas aeruginosa (strain ATCC 15692 / DSM 22644 / CIP 104116 / JCM 14847 / LMG 12228 / 1C / PRS 101 / PAO1).